The primary structure comprises 464 residues: NADH-ubiquinone oxidoreductase chain 4 (464 aa).

13 helical membrane-spanning segments follow: residues 18-38, 54-74, 79-99, 102-122, 131-151, 168-188, 207-227, 239-259, 266-286, 297-317, 332-352, 375-395, and 420-440; these read LLPTYGKGLILVASILVVLPT, IADIFILLTAYLLPLSIIANW, SLLYFELILNLGVILLINFMC, MLSFYVYFEISLAPLFILIGL, AADYILIYTLFSSLFMLLAIG, VVLSTDLQCILFLCISAGIMV, PLAGSMLLAGVILKLAVYAII, VLYTPVVYVICAITIIYTSII, LKVIVAYSSISHMAVCILGIL, LILSLAHGFVSPALFIIVGGI, GLLTYMPILAIYLLILSFSNI, TILGCISAFSVLLSAAYMLKV, and LLMIALIIPTLWYGLYPNGII.

The protein belongs to the complex I subunit 4 family.

It is found in the mitochondrion membrane. It catalyses the reaction a ubiquinone + NADH + 5 H(+)(in) = a ubiquinol + NAD(+) + 4 H(+)(out). Functionally, core subunit of the mitochondrial membrane respiratory chain NADH dehydrogenase (Complex I) that is believed to belong to the minimal assembly required for catalysis. Complex I functions in the transfer of electrons from NADH to the respiratory chain. The immediate electron acceptor for the enzyme is believed to be ubiquinone. This is NADH-ubiquinone oxidoreductase chain 4 (NAD4) from Candida albicans (strain SC5314 / ATCC MYA-2876) (Yeast).